Consider the following 828-residue polypeptide: Periplasmic nitrate reductase (828 aa).

A signal peptide (tat-type signal) is located at residues 1 to 31; sequence MKLSRRGFMKANAVAAAAAAAGLSVPGVARA. The 57-residue stretch at 39-95 folds into the 4Fe-4S Mo/W bis-MGD-type domain; it reads IKWDKAPCRFCGTGCGVLVGTQQGRVVACQGDPDAPVNRGLNCIKGYFLPKIMYGED. [4Fe-4S] cluster contacts are provided by cysteine 46, cysteine 49, cysteine 53, and cysteine 81. Mo-bis(molybdopterin guanine dinucleotide) contacts are provided by residues lysine 83, glutamine 150, asparagine 175, cysteine 179, 212–219, 243–247, 262–264, methionine 372, glutamine 376, asparagine 482, 508–509, lysine 531, aspartate 558, and 718–727; these read WGANMAEM, STYQH, QSD, SD, and TGRVLEHWHT. Phenylalanine 794 contributes to the substrate binding site. The Mo-bis(molybdopterin guanine dinucleotide) site is built by asparagine 802 and lysine 819.

The protein belongs to the prokaryotic molybdopterin-containing oxidoreductase family. NasA/NapA/NarB subfamily. As to quaternary structure, component of the periplasmic nitrate reductase NapAB complex composed of NapA and NapB. [4Fe-4S] cluster is required as a cofactor. Requires Mo-bis(molybdopterin guanine dinucleotide) as cofactor. Post-translationally, predicted to be exported by the Tat system. The position of the signal peptide cleavage has not been experimentally proven.

The protein resides in the periplasm. The enzyme catalyses 2 Fe(II)-[cytochrome] + nitrate + 2 H(+) = 2 Fe(III)-[cytochrome] + nitrite + H2O. Functionally, catalytic subunit of the periplasmic nitrate reductase complex NapAB. Receives electrons from NapB and catalyzes the reduction of nitrate to nitrite. The protein is Periplasmic nitrate reductase of Shigella dysenteriae serotype 1 (strain Sd197).